The following is an 861-amino-acid chain: MARYNPKDTEPKWREAWAKADVFKTGEINDGRPKYYVLEMFPYPSGRIHMGHVRNYAMGDVVARYKRAQGFNVLHPMGWDAFGMPAENAAMERGVHPKGWTYDNIAAMREQLKSLGISVDWSREFATCDPEYYGKQQAWFLRLLKRGLVYRKEASVNWDPVDMTVLANEQVIDGKGWRSGAVVEKRKLTQWFLRITDYADALIDGLKTLDRWPDKVRLMQENWIGRSKGLRFKFQFDGEAPDGMAEGLEVYTTRPDTLFGASFVGIAPEHPLAEQLAAANPQIQTFIADCRKGGTSEAEIESAEKLGYDTGLRVKHPLDPSITLPVWIANFILMDYGTGAIFACPAHDQRDLDFARKYDLPVLPVVLPNGEDPATFTVGKEAYVGPGKIFNSKFLDGLDVEAAKAEAIARIEAANQGQGATVYRLRDWGVSRQRYWGCPIPVIHCEACGVVPVPEDQLPVALPDDVTFDKPGNPLLRHPTWRHTTCPSCGGKAERETDTLDTFIDSSWYFARFADTQAAEPVGKDAADHWLPVDQYIGGVEHAILHLLYARFITRALKDEGLLSVEEPFAGLFTQGMVTHEAYKNEAGEWVEPSDVVITTEGSTRTAKHAKTGAPIIIGDIEKMSKSKKNVVAPEDIFEAYGVDSARLFVMSDSPPERDVQWTNSGVEGSWRFTHRLWNEFDSQPAGDFAHDDSDEAALALRKAAHKLIGFVTDSIEGFRFNSGVARLYEFLNALKAAPAEGASQAVLAARAEALNILARLVAPFTPHLAEEAWARMGGEGMVVDAPWPKADPALAADDERVLPIQINGKRRGEIKVKAGAPDDEVTKIALADPNVMAHLEGLTVRKVIVVKDRIVNIVAN.

The short motif at 42 to 52 is the 'HIGH' region element; it reads PYPSGRIHMGH. A 'KMSKS' region motif is present at residues 623–627; the sequence is KMSKS. Residue Lys-626 participates in ATP binding.

Belongs to the class-I aminoacyl-tRNA synthetase family.

The protein localises to the cytoplasm. The catalysed reaction is tRNA(Leu) + L-leucine + ATP = L-leucyl-tRNA(Leu) + AMP + diphosphate. The polypeptide is Leucine--tRNA ligase (Caulobacter vibrioides (strain ATCC 19089 / CIP 103742 / CB 15) (Caulobacter crescentus)).